The following is a 397-amino-acid chain: DNA excision repair protein ERCC-8 (397 aa).

WD repeat units lie at residues 41 to 81, 97 to 137, 184 to 224, 243 to 282, and 332 to 371; these read IHCS…RQPY, VHKY…IADV, GHRQ…GCLI, AHNG…NTLV, and GHYK…SVPD. The tract at residues 370 to 397 is disordered; sequence PDDDDETSTRSQLNPAFEDAWSSSDEEG. Residues Ser391, Ser392, and Ser393 each carry the phosphoserine modification.

As to quaternary structure, part of the CSA complex (also named DCX(ERCC8) complex), a DCX E3 ubiquitin-protein ligase complex containing ERCC8, RBX1, DDB1 and CUL4A; the CSA complex interacts with RNA polymerase II; upon UV irradiation it interacts with the COP9 signalosome and preferentially with the hyperphosphorylated form of RNA polymerase II. Interacts with ERCC6/CSB (via CIM motif); promoting recruitment to lesion-stalled RNA polymerase II (Pol II). Interacts with KIAA1530/UVSSA. Interacts with a subunit of RNA polymerase II TFIIH.

The protein resides in the nucleus. It is found in the chromosome. The protein localises to the nucleus matrix. The protein operates within protein modification; protein ubiquitination. In terms of biological role, substrate-recognition component of the CSA complex, a DCX (DDB1-CUL4-X-box) E3 ubiquitin-protein ligase complex, involved in transcription-coupled nucleotide excision repair (TC-NER), a process during which RNA polymerase II-blocking lesions are rapidly removed from the transcribed strand of active genes. Following recruitment to lesion-stalled RNA polymerase II (Pol II), the CSA complex mediates ubiquitination of Pol II subunit POLR2A/RPB1 at 'Lys-1268', a critical TC-NER checkpoint, governing RNA Pol II stability and initiating DNA damage excision by TFIIH recruitment. The CSA complex also promotes the ubiquitination and subsequent proteasomal degradation of ERCC6/CSB in a UV-dependent manner; ERCC6 degradation is essential for the recovery of RNA synthesis after transcription-coupled repair. Also plays a role in DNA double-strand breaks (DSSBs) repair by non-homologous end joining (NHEJ). The protein is DNA excision repair protein ERCC-8 (ERCC8) of Bos taurus (Bovine).